A 618-amino-acid polypeptide reads, in one-letter code: UvrABC system protein C (618 aa).

Residues 20-98 (TAPGVYRMYA…IKSLSPRYNV (79 aa)) enclose the GIY-YIG domain. In terms of domain architecture, UVR spans 207 to 242 (DQLGEEIMQSMQQASEALEFERAARLRDLLSSLRSM).

This sequence belongs to the UvrC family. In terms of assembly, interacts with UvrB in an incision complex.

Its subcellular location is the cytoplasm. The UvrABC repair system catalyzes the recognition and processing of DNA lesions. UvrC both incises the 5' and 3' sides of the lesion. The N-terminal half is responsible for the 3' incision and the C-terminal half is responsible for the 5' incision. This is UvrABC system protein C from Xanthomonas oryzae pv. oryzae (strain MAFF 311018).